Reading from the N-terminus, the 609-residue chain is MIQVLLVTICLAVFPYQGSSIILGSGNVNDYEVVYPRKVTAVPKGAVQPKYEDTMQYEFKVNGEPVVLHLEKNKGLFSKDYSETHYSPDGREITTYPSVEDHCYYHGRIQNDADSTASISACNGLKGHFKLQGEMYLIEPLRFSDSEAHAVFKYENVEKEDEAPKMCGVTQTNWESDEPIKKASKLVVTAEQQRYLNNFRFIELVIVADYRMFTKFNSNLNEVKTWVYEIVNTLNEIYRYLYVRVALVALEVWSNGDLSSVTLSAYDTLDSFGEWRKRDLLKRKSHDNAQLLTAIDFNGTIIGLAHVASMCDPKCSTGIVQDYSSRNLVVAVIMAHEMGHNLGIRHDRENCTCHANSCIMSAVISDQPSKYFSNCSHVQYWNYINDDEPQCILNEPLRTDIVSPPVCGNELLEVGEECDCGSPATCRYPCCDAATCKLHSWVECESGECCEQCRFRTAGTECRARRSECDIAESCTGHSADCPTDRFHRNGQPCLHNFGYCYNGNCPIMYHQCYALWGANATVAKDSCFEDNQKGNDYGYCRKENGRKIPCEPQDVKCGRLYCSLGNQLPCRFFYTPTDENIGMVDTGTKCGDKKVCSNRQCVDVNTAY.

A signal peptide spans M1 to S20. A propeptide spanning residues I21–A190 is cleaved from the precursor. Positions R200–P396 constitute a Peptidase M12B domain. Ca(2+)-binding residues include E203 and D287. N298 is a glycosylation site (N-linked (GlcNAc...) asparagine). Cystine bridges form between C311–C391, C351–C375, and C353–C358. H336 contacts Zn(2+). The active site involves E337. Residues H340 and H346 each coordinate Zn(2+). N350 is a glycosylation site (N-linked (GlcNAc...) asparagine). A glycan (N-linked (GlcNAc...) asparagine) is linked at N374. Positions 391 and 394 each coordinate Ca(2+). Positions L397 to D400 are excised as a propeptide. Residues P404 to N490 form the Disintegrin domain. Residues V406, N409, L411, E413, E416, and D419 each contribute to the Ca(2+) site. Intrachain disulfides connect C407-C426, C407-C436, C418-C431, C418-C436, C420-C426, C430-C453, C444-C450, C449-C475, C462-C482, C469-C494, C469-C501, C494-C506, C501-C506, C513-C528, C513-C563, C528-C571, C541-C551, C551-C558, C558-C597, C563-C571, C591-C602, and C597-C602. A D/ECD-tripeptide motif is present at residues E468–D470. Ca(2+)-binding residues include D470, E473, and D485. A glycan (N-linked (GlcNAc...) asparagine) is linked at N520.

This sequence belongs to the venom metalloproteinase (M12B) family. P-III subfamily. P-IIIb sub-subfamily. In terms of assembly, monomer. Requires Zn(2+) as cofactor. In terms of tissue distribution, expressed by the venom gland.

It localises to the secreted. Zinc protease that induces hemorrhage and has proteolytic activity. Has preference for Ala, His, Pro, Met, and Tyr at the P1 position, in descending order (in vitro). Predominantly prefers Val and Asp at the P3 and P2 positions, respectively. In terms of biological role, inhibits platelet aggregation induced by ADP, thrombin, platelet-activating factor and collagen. Acts by inhibiting fibrinogen interaction with platelet receptors alpha-IIb/beta-3 (ITGA2B/ITGB3). In Protobothrops flavoviridis (Habu), this protein is Zinc metalloproteinase/disintegrin-like HR1a.